We begin with the raw amino-acid sequence, 900 residues long: Protein translocase subunit SecA (900 aa).

Residues Q87, G105–T109, and D510 each bind ATP. The tract at residues D857–K890 is disordered. Residues D860 to G872 show a composition bias toward low complexity. Zn(2+)-binding residues include C884, C886, C895, and H896.

It belongs to the SecA family. Monomer and homodimer. Part of the essential Sec protein translocation apparatus which comprises SecA, SecYEG and auxiliary proteins SecDF-YajC and YidC. Zn(2+) is required as a cofactor.

Its subcellular location is the cell inner membrane. It localises to the cytoplasm. The enzyme catalyses ATP + H2O + cellular proteinSide 1 = ADP + phosphate + cellular proteinSide 2.. In terms of biological role, part of the Sec protein translocase complex. Interacts with the SecYEG preprotein conducting channel. Has a central role in coupling the hydrolysis of ATP to the transfer of proteins into and across the cell membrane, serving both as a receptor for the preprotein-SecB complex and as an ATP-driven molecular motor driving the stepwise translocation of polypeptide chains across the membrane. The protein is Protein translocase subunit SecA of Marinomonas sp. (strain MWYL1).